The primary structure comprises 407 residues: Argininosuccinate synthase (407 aa).

Residues 10–18 (AYSGGLDTS) and Ala37 contribute to the ATP site. Residues Tyr90 and Ser95 each coordinate L-citrulline. Residue Gly120 coordinates ATP. L-aspartate-binding residues include Thr122, Asn126, and Asp127. Position 126 (Asn126) interacts with L-citrulline. Residues Arg130, Ser181, Ser190, Glu266, and Tyr278 each contribute to the L-citrulline site.

This sequence belongs to the argininosuccinate synthase family. Type 1 subfamily. In terms of assembly, homotetramer.

The protein localises to the cytoplasm. The enzyme catalyses L-citrulline + L-aspartate + ATP = 2-(N(omega)-L-arginino)succinate + AMP + diphosphate + H(+). The protein operates within amino-acid biosynthesis; L-arginine biosynthesis; L-arginine from L-ornithine and carbamoyl phosphate: step 2/3. The polypeptide is Argininosuccinate synthase (Ruegeria sp. (strain TM1040) (Silicibacter sp.)).